Reading from the N-terminus, the 378-residue chain is Erythronate-4-phosphate dehydrogenase (378 aa).

Residues Ser45 and Thr67 each contribute to the substrate site. NAD(+) is bound at residue Asp147. Residue Arg209 is part of the active site. Residue Asp233 participates in NAD(+) binding. Glu238 is an active-site residue. Catalysis depends on His255, which acts as the Proton donor. An NAD(+)-binding site is contributed by Gly258. Tyr259 contacts substrate.

Belongs to the D-isomer specific 2-hydroxyacid dehydrogenase family. PdxB subfamily. In terms of assembly, homodimer.

It localises to the cytoplasm. The enzyme catalyses 4-phospho-D-erythronate + NAD(+) = (R)-3-hydroxy-2-oxo-4-phosphooxybutanoate + NADH + H(+). It participates in cofactor biosynthesis; pyridoxine 5'-phosphate biosynthesis; pyridoxine 5'-phosphate from D-erythrose 4-phosphate: step 2/5. Functionally, catalyzes the oxidation of erythronate-4-phosphate to 3-hydroxy-2-oxo-4-phosphonooxybutanoate. This Shewanella denitrificans (strain OS217 / ATCC BAA-1090 / DSM 15013) protein is Erythronate-4-phosphate dehydrogenase.